A 235-amino-acid polypeptide reads, in one-letter code: C-type lectin domain family 2 member D-related protein (235 aa).

Positions 1–50 (MPSSAHLQDPPPHLSRTLTQDEEQTSLRQSSSCGPSTTSASASESLSGST) are disordered. The Cytoplasmic portion of the chain corresponds to 1-75 (MPSSAHLQDP…KIIPTESAAK (75 aa)). Residues 30–50 (SSSCGPSTTSASASESLSGST) are compositionally biased toward low complexity. The helical; Signal-anchor for type II membrane protein transmembrane segment at 76–96 (LLCCYAVFMALTVVVIALSIA) threads the bilayer. Topologically, residues 97–235 (LSVKKTPQIS…KLNSYTSQCP (139 aa)) are extracellular. Residues 121–232 (FGNKCYYFNE…ICSKLNSYTS (112 aa)) form the C-type lectin domain. N-linked (GlcNAc...) asparagine glycosylation occurs at Asn134.

The protein resides in the cell membrane. Its function is as follows. Lectin-type cell surface receptor. The protein is C-type lectin domain family 2 member D-related protein of Rattus norvegicus (Rat).